The primary structure comprises 367 residues: Ferrochelatase (367 aa).

His213 and Glu294 together coordinate Fe cation.

Belongs to the ferrochelatase family.

It localises to the cytoplasm. The enzyme catalyses heme b + 2 H(+) = protoporphyrin IX + Fe(2+). Its pathway is porphyrin-containing compound metabolism; protoheme biosynthesis; protoheme from protoporphyrin-IX: step 1/1. In terms of biological role, catalyzes the ferrous insertion into protoporphyrin IX. The protein is Ferrochelatase of Dechloromonas aromatica (strain RCB).